A 342-amino-acid polypeptide reads, in one-letter code: Ferrochelatase (342 aa).

Fe cation contacts are provided by histidine 188 and glutamate 268.

It belongs to the ferrochelatase family.

The protein localises to the cytoplasm. The catalysed reaction is heme b + 2 H(+) = protoporphyrin IX + Fe(2+). Its pathway is porphyrin-containing compound metabolism; protoheme biosynthesis; protoheme from protoporphyrin-IX: step 1/1. Catalyzes the ferrous insertion into protoporphyrin IX. The polypeptide is Ferrochelatase (Rickettsia prowazekii (strain Madrid E)).